Reading from the N-terminus, the 433-residue chain is Tol-Pal system protein TolB (433 aa).

A signal peptide spans 1 to 26 (MNKLRLFRSFFAFLLPFGMATGAAHG).

This sequence belongs to the TolB family. As to quaternary structure, the Tol-Pal system is composed of five core proteins: the inner membrane proteins TolA, TolQ and TolR, the periplasmic protein TolB and the outer membrane protein Pal. They form a network linking the inner and outer membranes and the peptidoglycan layer.

It is found in the periplasm. Part of the Tol-Pal system, which plays a role in outer membrane invagination during cell division and is important for maintaining outer membrane integrity. In Methylobacillus flagellatus (strain ATCC 51484 / DSM 6875 / VKM B-1610 / KT), this protein is Tol-Pal system protein TolB.